The sequence spans 93 residues: YcgL domain-containing protein VSAL_I1068 (93 aa).

The region spanning 1–84 (MYCSIYKSSK…PPENLLEKYK (84 aa)) is the YcgL domain.

In Aliivibrio salmonicida (strain LFI1238) (Vibrio salmonicida (strain LFI1238)), this protein is YcgL domain-containing protein VSAL_I1068.